The primary structure comprises 355 residues: MEPEKQTEISEFFLQGLSEKPEHQTLLFTMFLSTYLVTIIGNALIILAIITDSHLHTPMYFFLFNLSLVDTLLSSTTVPKMLANIQAQSRAIPFVGCLTQMYAFHLFGTMDSFLLAVMAIDRFVAIVHPQRYLVLMCSPVCGLLLGASWMITNLQSLIHTCLMAQLTFCAGSEISHFFCDLMPLLKLSGSDTHTNELVIFAFGIVVGTSPFSCILLSYIRIFWTVFKIPSTRGKWKAFSTCGLHLTVVSLSYGTIFAVYLQPTSPSSSQKDKAAALMCGVFIPMLNPFIYSIRNKDMKAALGKLIGKVAVPCPRPEQLLDVYHVPGSLLAARDTEMHPIPYPGGVQSLAGNRDME.

At 1–25 (MEPEKQTEISEFFLQGLSEKPEHQT) the chain is on the extracellular side. The chain crosses the membrane as a helical span at residues 26–49 (LLFTMFLSTYLVTIIGNALIILAI). Residues 50–57 (ITDSHLHT) lie on the Cytoplasmic side of the membrane. A helical membrane pass occupies residues 58–79 (PMYFFLFNLSLVDTLLSSTTVP). The Extracellular segment spans residues 80–100 (KMLANIQAQSRAIPFVGCLTQ). Residues 101–120 (MYAFHLFGTMDSFLLAVMAI) traverse the membrane as a helical segment. Topologically, residues 121-139 (DRFVAIVHPQRYLVLMCSP) are cytoplasmic. Residues 140 to 158 (VCGLLLGASWMITNLQSLI) form a helical membrane-spanning segment. The Extracellular segment spans residues 159–195 (HTCLMAQLTFCAGSEISHFFCDLMPLLKLSGSDTHTN). Residues 196–219 (ELVIFAFGIVVGTSPFSCILLSYI) form a helical membrane-spanning segment. Residues 220–236 (RIFWTVFKIPSTRGKWK) are Cytoplasmic-facing. The chain crosses the membrane as a helical span at residues 237–259 (AFSTCGLHLTVVSLSYGTIFAVY). Topologically, residues 260–272 (LQPTSPSSSQKDK) are extracellular. A helical transmembrane segment spans residues 273–292 (AAALMCGVFIPMLNPFIYSI). Topologically, residues 293–355 (RNKDMKAALG…QSLAGNRDME (63 aa)) are cytoplasmic.

This sequence belongs to the G-protein coupled receptor 1 family.

The protein localises to the cell membrane. Odorant receptor. The polypeptide is Olfactory receptor 1I1 (OR1I1) (Homo sapiens (Human)).